We begin with the raw amino-acid sequence, 539 residues long: Chaperonin GroEL (539 aa).

ATP is bound by residues 30-33 (TLGP), K51, 87-91 (DGTTT), G415, 479-481 (NAA), and D495.

It belongs to the chaperonin (HSP60) family. Forms a cylinder of 14 subunits composed of two heptameric rings stacked back-to-back. Interacts with the co-chaperonin GroES.

It localises to the cytoplasm. The enzyme catalyses ATP + H2O + a folded polypeptide = ADP + phosphate + an unfolded polypeptide.. Together with its co-chaperonin GroES, plays an essential role in assisting protein folding. The GroEL-GroES system forms a nano-cage that allows encapsulation of the non-native substrate proteins and provides a physical environment optimized to promote and accelerate protein folding. The protein is Chaperonin GroEL of Enterobacter agglomerans (Erwinia herbicola).